The sequence spans 334 residues: Cathepsin R (334 aa).

The signal sequence occupies residues 1-17 (MAAVVFIAFLYLGVASG). Positions 18 to 114 (VPVLDSSLDA…SIMKREAGSI (97 aa)) are cleaved as a propeptide — activation peptide. 2 disulfides stabilise this stretch: cysteine 136/cysteine 179 and cysteine 170/cysteine 212. Cysteine 139 is a catalytic residue. N-linked (GlcNAc...) asparagine glycosylation occurs at asparagine 269. Cysteines 270 and 323 form a disulfide. Residues histidine 277 and asparagine 301 contribute to the active site.

Belongs to the peptidase C1 family. Placenta.

It is found in the lysosome. The protein is Cathepsin R (Ctsr) of Mus musculus (Mouse).